A 204-amino-acid polypeptide reads, in one-letter code: Probable GTP-binding protein EngB (204 aa).

Residues 1 to 21 (MKVSSAEFVTSGTRPAHYPPP) are disordered. Residues 22 to 194 (ELPEVAFAGR…WARIEVMLAA (173 aa)) form the EngB-type G domain. GTP contacts are provided by residues 30–37 (GRSNVGKS), 57–61 (GRTQL), 75–78 (DLPG), 142–145 (TKCD), and 173–175 (FSA). The Mg(2+) site is built by S37 and T59.

It belongs to the TRAFAC class TrmE-Era-EngA-EngB-Septin-like GTPase superfamily. EngB GTPase family. Mg(2+) serves as cofactor.

Its function is as follows. Necessary for normal cell division and for the maintenance of normal septation. The sequence is that of Probable GTP-binding protein EngB from Geobacter metallireducens (strain ATCC 53774 / DSM 7210 / GS-15).